Reading from the N-terminus, the 33-residue chain is Gastrin (33 aa).

Q1 bears the Pyrrolidone carboxylic acid mark. Position 28 is a sulfotyrosine (Y28). A Phenylalanine amide modification is found at F33.

Belongs to the gastrin/cholecystokinin family. Sulfation enhances proteolytic processing, and blocks peptide degradation. Levels of sulfation differ between proteolytically-cleaved gastrins and between tissues.

The protein localises to the secreted. In terms of biological role, gastrin stimulates the stomach mucosa to produce and secrete hydrochloric acid and the pancreas to secrete its digestive enzymes. It also stimulates smooth muscle contraction and increases blood circulation and water secretion in the stomach and intestine. The sequence is that of Gastrin (GAST) from Macropus giganteus (Eastern gray kangaroo).